The primary structure comprises 643 residues: Threonine--tRNA ligase (643 aa).

The region spanning 1-61 is the TGS domain; sequence MPIITLPDGS…TEDSTLEIIT (61 aa). The segment at 243–534 is catalytic; it reads DHRKIGKALD…ITEEYAGFFP (292 aa). C334, H385, and H511 together coordinate Zn(2+).

It belongs to the class-II aminoacyl-tRNA synthetase family. In terms of assembly, homodimer. Zn(2+) is required as a cofactor.

It is found in the cytoplasm. The enzyme catalyses tRNA(Thr) + L-threonine + ATP = L-threonyl-tRNA(Thr) + AMP + diphosphate + H(+). In terms of biological role, catalyzes the attachment of threonine to tRNA(Thr) in a two-step reaction: L-threonine is first activated by ATP to form Thr-AMP and then transferred to the acceptor end of tRNA(Thr). Also edits incorrectly charged L-seryl-tRNA(Thr). This chain is Threonine--tRNA ligase, found in Mannheimia succiniciproducens (strain KCTC 0769BP / MBEL55E).